Reading from the N-terminus, the 262-residue chain is ATP synthase subunit a (262 aa).

Transmembrane regions (helical) follow at residues 26 to 46 (VHID…FVFS), 86 to 106 (VAPL…IDLI), 130 to 150 (DISA…FYTI), 204 to 226 (LIFI…GIPL), and 240 to 260 (LQAF…YNKA).

Belongs to the ATPase A chain family. In terms of assembly, F-type ATPases have 2 components, CF(1) - the catalytic core - and CF(0) - the membrane proton channel. CF(1) has five subunits: alpha(3), beta(3), gamma(1), delta(1), epsilon(1). CF(0) has three main subunits: a(1), b(2) and c(9-12). The alpha and beta chains form an alternating ring which encloses part of the gamma chain. CF(1) is attached to CF(0) by a central stalk formed by the gamma and epsilon chains, while a peripheral stalk is formed by the delta and b chains.

The protein localises to the cell inner membrane. Key component of the proton channel; it plays a direct role in the translocation of protons across the membrane. The protein is ATP synthase subunit a of Haemophilus influenzae (strain PittEE).